Reading from the N-terminus, the 488-residue chain is 3-octaprenyl-4-hydroxybenzoate carboxy-lyase (488 aa).

Residue asparagine 172 participates in Mn(2+) binding. Residues 175–177 (IYR), 189–191 (RWL), and 194–195 (RG) each bind prenylated FMN. Glutamate 238 contacts Mn(2+). Aspartate 287 functions as the Proton donor in the catalytic mechanism.

The protein belongs to the UbiD family. In terms of assembly, homohexamer. It depends on prenylated FMN as a cofactor. Requires Mn(2+) as cofactor.

Its subcellular location is the cell membrane. The enzyme catalyses a 4-hydroxy-3-(all-trans-polyprenyl)benzoate + H(+) = a 2-(all-trans-polyprenyl)phenol + CO2. Its pathway is cofactor biosynthesis; ubiquinone biosynthesis. Its function is as follows. Catalyzes the decarboxylation of 3-octaprenyl-4-hydroxy benzoate to 2-octaprenylphenol, an intermediate step in ubiquinone biosynthesis. The polypeptide is 3-octaprenyl-4-hydroxybenzoate carboxy-lyase (Legionella pneumophila (strain Corby)).